A 104-amino-acid chain; its full sequence is Meiotically up-regulated gene 150 protein (104 aa).

Transmembrane regions (helical) follow at residues 30–50 (FFLK…KAWI), 54–74 (TISL…IPYF), and 84–104 (LLWF…SLEI).

It is found in the endoplasmic reticulum membrane. Functionally, has a role in meiosis. The chain is Meiotically up-regulated gene 150 protein (mug150) from Schizosaccharomyces pombe (strain 972 / ATCC 24843) (Fission yeast).